The following is a 508-amino-acid chain: Gasdermin-C (508 aa).

Positions 1 to 257 (MPSMLERISK…VGYCAARSEG (257 aa)) are triggers pyroptosis.

Belongs to the gasdermin family. As to quaternary structure, homooligomer; homooligomeric ring-shaped pore complex containing 27-28 subunits when inserted in the membrane. Post-translationally, cleavage by CASP8 relieves autoinhibition by releasing the N-terminal moiety (Gasdermin-C, N-terminal) that initiates pyroptosis. The cleavage site is unclear. According to a publication, it takes place after Asp-240 in response to alpha-ketoglutarate. Another paper reports cleavage by CASP8 after Asp-365. Palmitoylated. As to expression, expressed mainly in trachea and spleen. In the esophagus, expressed in differentiating cells and probably in differentiated cells. Also detected in gastric epithelium.

The protein resides in the cytoplasm. It is found in the cytosol. The protein localises to the cell membrane. The full-length protein before cleavage is inactive: intramolecular interactions between N- and C-terminal domains mediate autoinhibition in the absence of activation signal. The intrinsic pyroptosis-inducing activity is carried by the released N-terminal moiety (Gasdermin-C, N-terminal) following cleavage by caspase CASP8. In terms of biological role, this form constitutes the precursor of the pore-forming protein: upon cleavage, the released N-terminal moiety (Gasdermin-C, N-terminal) binds to membranes and forms pores, triggering pyroptosis. Pore-forming protein that causes membrane permeabilization and pyroptosis. Produced by the cleavage of gasdermin-C by caspase CASP8 in response to death signals. After cleavage, moves to the plasma membrane where it strongly binds to membrane inner leaflet lipids. Homooligomerizes within the membrane and forms pores of 10-15 nanometers (nm) of inner diameter, triggering pyroptosis. The protein is Gasdermin-C of Homo sapiens (Human).